Reading from the N-terminus, the 306-residue chain is Methionyl-tRNA formyltransferase (306 aa).

105–108 serves as a coordination point for (6S)-5,6,7,8-tetrahydrofolate; that stretch reads SLLP.

It belongs to the Fmt family.

It carries out the reaction L-methionyl-tRNA(fMet) + (6R)-10-formyltetrahydrofolate = N-formyl-L-methionyl-tRNA(fMet) + (6S)-5,6,7,8-tetrahydrofolate + H(+). Functionally, attaches a formyl group to the free amino group of methionyl-tRNA(fMet). The formyl group appears to play a dual role in the initiator identity of N-formylmethionyl-tRNA by promoting its recognition by IF2 and preventing the misappropriation of this tRNA by the elongation apparatus. This is Methionyl-tRNA formyltransferase from Rubrobacter xylanophilus (strain DSM 9941 / JCM 11954 / NBRC 16129 / PRD-1).